Reading from the N-terminus, the 259-residue chain is Haloacid dehalogenase-like hydrolase domain-containing protein 2 (259 aa).

Positions 13 and 15 each coordinate Mg(2+). Residues 13–15 and 46–47 each bind substrate; these read DLS and TN. Residues 49–71 adopt a coiled-coil conformation; it reads TKESKRDLLERLRKLEFDISEEE. K50 is modified (N6-succinyllysine). Residue K179 coordinates substrate. D204 contributes to the Mg(2+) binding site.

The protein belongs to the HAD-like hydrolase superfamily. It depends on Mg(2+) as a cofactor.

The polypeptide is Haloacid dehalogenase-like hydrolase domain-containing protein 2 (Hdhd2) (Rattus norvegicus (Rat)).